The primary structure comprises 284 residues: Polyamine aminopropyltransferase (284 aa).

A PABS domain is found at 2–237 (ELWYTEKHTE…GHWLFGFASK (236 aa)). Gln31 provides a ligand contact to S-methyl-5'-thioadenosine. Spermidine is bound by residues His62 and Asp86. S-methyl-5'-thioadenosine-binding positions include Glu106 and 137 to 138 (DG). Catalysis depends on Asp155, which acts as the Proton acceptor. Residue 155–158 (DSTD) participates in spermidine binding. An S-methyl-5'-thioadenosine-binding site is contributed by Pro162.

Belongs to the spermidine/spermine synthase family. In terms of assembly, homodimer or homotetramer.

It localises to the cytoplasm. The catalysed reaction is S-adenosyl 3-(methylsulfanyl)propylamine + putrescine = S-methyl-5'-thioadenosine + spermidine + H(+). Its pathway is amine and polyamine biosynthesis; spermidine biosynthesis; spermidine from putrescine: step 1/1. Its function is as follows. Catalyzes the irreversible transfer of a propylamine group from the amino donor S-adenosylmethioninamine (decarboxy-AdoMet) to putrescine (1,4-diaminobutane) to yield spermidine. The sequence is that of Polyamine aminopropyltransferase from Clostridium botulinum (strain Alaska E43 / Type E3).